We begin with the raw amino-acid sequence, 306 residues long: MSVCQTNPLNTLVSKSGYRFGQPNQHQQSIAQQQSRPRNNALDHQFSQFTGASGPSFAHPQHQQLPMAAVVANATTAASTTSNTATASDHHVWIDQFANMQVHDKTEFPTDYKQMYSQYEARGASYSMGAPVMVSHSQMFPRHQQSLMVNQLESQAYASSSAKLDEQFAELERQVQDDEKEQQQDKDDDFHLKETSPLDEDQRQLKEAAQSIYTTLSDKSSTTSSKFSNSKFLGLMRNISDGVITLKKNPDEDKYTELYSPSTGETFGEEYFPVQDSVLGDPLDSIGDLSNMSSSEAAAKVYHNSV.

Residue Cys-4 forms a Glycyl cysteine thioester (Cys-Gly) (interchain with G-Cter in ubiquitin) linkage. The tract at residues 172-203 is disordered; sequence ERQVQDDEKEQQQDKDDDFHLKETSPLDEDQR.

It belongs to the peroxin-21 family. As to quaternary structure, interacts with PEX7. Monoubiquitinated at Cys-4; acts as a signal for PEX21 extraction and is required for proper export from peroxisomes and recycling.

The protein localises to the cytoplasm. The protein resides in the cytosol. Its subcellular location is the peroxisome. Mediates peroxisomal import of proteins containing a C-terminal PTS2-type peroxisomal targeting signal via its interaction with PEX7. Interaction with PEX7 only takes place when PEX7 is associated with cargo proteins containing a PTS2 peroxisomal targeting signal. PEX7 along with PTS2-containing cargo proteins are then translocated through the PEX13-PEX14 docking complex together with PEX21. The chain is Peroxisomal protein PEX21 (PEX21) from Kluyveromyces lactis (strain ATCC 8585 / CBS 2359 / DSM 70799 / NBRC 1267 / NRRL Y-1140 / WM37) (Yeast).